Reading from the N-terminus, the 377-residue chain is Prolargin (377 aa).

The signal sequence occupies residues 1-21 (MRASFFWFLPLLLILASVAQG). A disordered region spans residues 22–61 (QPRPKPGIRRKPKPRPTPSFPQPHEPAEPTDLPPPLPPGP). Composition is skewed to pro residues over residues 36–45 (RPTPSFPQPH) and 52–61 (DLPPPLPPGP). LRR repeat units lie at residues 90 to 109 (RKVP…NNFI), 110 to 133 (TELP…NNRI), 134 to 157 (RKVD…KNQL), 158 to 178 (EEVP…QNLI), 179 to 202 (SRIP…HNRL), 203 to 228 (SDGV…HNIL), 229 to 249 (RRMP…SNKI), 250 to 273 (ETIP…YNKL), 274 to 298 (SDRG…HNKI), 299 to 318 (SNVP…NNSI), 319 to 357 (EKIN…GNFL), and 358 to 377 (KPPI…SVVI). Asn119 carries an N-linked (GlcNAc...) asparagine glycan. N-linked (GlcNAc...) asparagine glycans are attached at residues Asn284, Asn315, and Asn322. A disulfide bridge links Cys327 with Cys368.

Belongs to the small leucine-rich proteoglycan (SLRP) family. SLRP class II subfamily. In terms of assembly, binds the basement membrane heparan sulfate proteoglycan perlecan and triple helical collagens type I and type II. Post-translationally, glycosylated; contains heparan sulfate.

It is found in the secreted. It localises to the extracellular space. The protein localises to the extracellular matrix. Functionally, may anchor basement membranes to the underlying connective tissue. This is Prolargin (Prelp) from Rattus norvegicus (Rat).